The following is a 332-amino-acid chain: Nuclear hormone receptor family member nhr-9 (332 aa).

Residues 11–85 (ERRCAICSKL…MGMRIVTNQY (75 aa)) constitute a DNA-binding region (nuclear receptor). 2 consecutive NR C4-type zinc fingers follow at residues 14–34 (CAIC…CNAC) and 50–73 (CINN…YNKC). The NR LBD domain occupies 101–332 (DRSNKLMNFQ…KRLCAELLGA (232 aa)).

Belongs to the nuclear hormone receptor family.

The protein localises to the nucleus. Functionally, orphan nuclear receptor. The sequence is that of Nuclear hormone receptor family member nhr-9 (nhr-9) from Caenorhabditis elegans.